Consider the following 168-residue polypeptide: Ribosome maturation factor RimM (168 aa).

The PRC barrel domain maps to 95–168; that stretch reads KEGDYYWTDL…IIVVEWDADF (74 aa).

The protein belongs to the RimM family. As to quaternary structure, binds ribosomal protein uS19.

It localises to the cytoplasm. Functionally, an accessory protein needed during the final step in the assembly of 30S ribosomal subunit, possibly for assembly of the head region. Essential for efficient processing of 16S rRNA. May be needed both before and after RbfA during the maturation of 16S rRNA. It has affinity for free ribosomal 30S subunits but not for 70S ribosomes. This is Ribosome maturation factor RimM from Coxiella burnetii (strain CbuK_Q154) (Coxiella burnetii (strain Q154)).